We begin with the raw amino-acid sequence, 133 residues long: Protein msa (133 aa).

The next 4 helical transmembrane spans lie at 3-23 (YLIL…AIGL), 27-47 (ILAA…ILFF), 55-75 (YIFF…VHLM), and 103-123 (FGFD…IILY).

Its subcellular location is the cell membrane. Its function is as follows. Accessory element involved in the expression of sarA and several virulence factors. Modulates SarA production and/or function in a strain-dependent manner. Affects the transcription of the accessory gene regulator (agr) and genes encoding virulence factors including alpha toxin (hla) and protein A (spa). The polypeptide is Protein msa (msa) (Staphylococcus aureus (strain bovine RF122 / ET3-1)).